The following is a 456-amino-acid chain: Bifunctional protein GlmU (456 aa).

Residues 1–228 (MPQNTLNIVI…SHLAAGVNNK (228 aa)) form a pyrophosphorylase region. Residues 11–14 (LAAG), K25, Q75, 80–81 (GT), 102–104 (YGD), G138, E153, N168, and N226 each bind UDP-N-acetyl-alpha-D-glucosamine. D104 is a Mg(2+) binding site. N226 lines the Mg(2+) pocket. The tract at residues 229–249 (LQLTELERIFQTEQAQELLKA) is linker. Positions 250–456 (GVTLRDPARF…GWVRPEKDKQ (207 aa)) are N-acetyltransferase. R332 and K350 together coordinate UDP-N-acetyl-alpha-D-glucosamine. The Proton acceptor role is filled by H362. Residues Y365 and N376 each coordinate UDP-N-acetyl-alpha-D-glucosamine. Residues A379, 385–386 (NY), S404, A422, and R439 each bind acetyl-CoA.

This sequence in the N-terminal section; belongs to the N-acetylglucosamine-1-phosphate uridyltransferase family. It in the C-terminal section; belongs to the transferase hexapeptide repeat family. Homotrimer. Mg(2+) serves as cofactor.

The protein resides in the cytoplasm. It catalyses the reaction alpha-D-glucosamine 1-phosphate + acetyl-CoA = N-acetyl-alpha-D-glucosamine 1-phosphate + CoA + H(+). It carries out the reaction N-acetyl-alpha-D-glucosamine 1-phosphate + UTP + H(+) = UDP-N-acetyl-alpha-D-glucosamine + diphosphate. It participates in nucleotide-sugar biosynthesis; UDP-N-acetyl-alpha-D-glucosamine biosynthesis; N-acetyl-alpha-D-glucosamine 1-phosphate from alpha-D-glucosamine 6-phosphate (route II): step 2/2. The protein operates within nucleotide-sugar biosynthesis; UDP-N-acetyl-alpha-D-glucosamine biosynthesis; UDP-N-acetyl-alpha-D-glucosamine from N-acetyl-alpha-D-glucosamine 1-phosphate: step 1/1. Its pathway is bacterial outer membrane biogenesis; LPS lipid A biosynthesis. In terms of biological role, catalyzes the last two sequential reactions in the de novo biosynthetic pathway for UDP-N-acetylglucosamine (UDP-GlcNAc). The C-terminal domain catalyzes the transfer of acetyl group from acetyl coenzyme A to glucosamine-1-phosphate (GlcN-1-P) to produce N-acetylglucosamine-1-phosphate (GlcNAc-1-P), which is converted into UDP-GlcNAc by the transfer of uridine 5-monophosphate (from uridine 5-triphosphate), a reaction catalyzed by the N-terminal domain. This Neisseria meningitidis serogroup B (strain ATCC BAA-335 / MC58) protein is Bifunctional protein GlmU.